The chain runs to 594 residues: MLRSHAAGLLREGDAGQQVTLAGWVARRRDHGGVIFIDLRDASGIAQVVFRDPQDTEVLAQAHRLRAEFCVSVAGVVEIRPEGNANPEIATGEIEVNATSLTVLGECAPLPFQLDEPAGEELRLKYRYLDLRRDDPAAAIRLRSRVNAAARAVLARHDFVEIETPTITRSTPEGARDFLVPARLHPGSFYALPQSPQLFKQLLMVAGMERYYQIARCYRDEDFRADRQPEFTQLDMEMSFVDAEDIIAISEEVLTELWALIGYRIPTPIPRIGYAEAMRRFGTDKPDLRFGLELVECTDFFSDTTFRVFQAPYVGAVVMPGGASQPRRTLDGWQDWAKQRGHRGLAYVLVAEDGTLGGPVAKNLTEAERTGLADHVGAKPGDCIFFSAGPVKSSRALLGAARVEIANRLGLIDPDAWAFVWVVDPPLFEPADEATAAGEVAVGSGAWTAVHHAFTAPKPEWEDRIESDTGSVLADAYDIVCNGHEIGGGSVRIHRRDIQERVFAVMGLDKAEAEEKFGFLLEAFMFGAPPHGGIAFGWDRTTALLAGMDSIREVIAFPKTGGGVDPLTDAPAPITAQQRKESGIDAQPKRVQQA.

Residue Glu173 participates in L-aspartate binding. Residues 197–200 (QLFK) are aspartate. Arg219 is an L-aspartate binding site. ATP-binding positions include 219–221 (RDE) and Gln228. His451 contacts L-aspartate. Glu485 provides a ligand contact to ATP. Residue Arg492 participates in L-aspartate binding. 537 to 540 (GWDR) is a binding site for ATP. The tract at residues 566 to 594 (PLTDAPAPITAQQRKESGIDAQPKRVQQA) is disordered.

This sequence belongs to the class-II aminoacyl-tRNA synthetase family. Type 1 subfamily. In terms of assembly, homodimer.

It localises to the cytoplasm. It carries out the reaction tRNA(Asx) + L-aspartate + ATP = L-aspartyl-tRNA(Asx) + AMP + diphosphate. Aspartyl-tRNA synthetase with relaxed tRNA specificity since it is able to aspartylate not only its cognate tRNA(Asp) but also tRNA(Asn). Reaction proceeds in two steps: L-aspartate is first activated by ATP to form Asp-AMP and then transferred to the acceptor end of tRNA(Asp/Asn). The polypeptide is Aspartate--tRNA(Asp/Asn) ligase (Mycobacterium tuberculosis (strain CDC 1551 / Oshkosh)).